Consider the following 872-residue polypeptide: Eukaryotic translation initiation factor 3 subunit C (872 aa).

The tract at residues 1 to 100 (MSRFFRGGDD…KVKSAKDKRF (100 aa)) is disordered. Acidic residues-rich tracts occupy residues 16 to 59 (SSEE…DEEE) and 72 to 87 (SDDE…SDDE). Residues 88 to 100 (ATTKVKSAKDKRF) are compositionally biased toward basic and acidic residues. Residues 613-787 (FHMHINLELL…ETVIFRKGVE (175 aa)) form the PCI domain. A disordered region spans residues 812 to 872 (TLEQKTQGSA…GGALGNAVRG (61 aa)). Over residues 831–848 (GGGQRGGGQRGGRGGART) the composition is skewed to gly residues.

It belongs to the eIF-3 subunit C family. Component of the eukaryotic translation initiation factor 3 (eIF-3) complex.

The protein localises to the cytoplasm. In terms of biological role, component of the eukaryotic translation initiation factor 3 (eIF-3) complex, which is involved in protein synthesis of a specialized repertoire of mRNAs and, together with other initiation factors, stimulates binding of mRNA and methionyl-tRNAi to the 40S ribosome. The eIF-3 complex specifically targets and initiates translation of a subset of mRNAs involved in cell proliferation. This chain is Eukaryotic translation initiation factor 3 subunit C (nip-1), found in Neurospora crassa (strain ATCC 24698 / 74-OR23-1A / CBS 708.71 / DSM 1257 / FGSC 987).